We begin with the raw amino-acid sequence, 193 residues long: MSPTGNYLNAITNRRTIYNLKPELPQGVGLDDVKRTVHVILKNTPTAFNSQVNRAVIIVGDTHKRIWDAVASAMPTAEAKKRPESCRDEAYGSVIFFTDEGPTEKLQRDFPALAAAFPTCAAHTTGAVQIQSWTALELLGLGANLQHYNDYVKSALPQDVPIAWTVQSQLVFGVPTALPEEKTFINNVINVYH.

This sequence belongs to the nitroreductase family. It depends on FMN as a cofactor.

Its subcellular location is the cytoplasm. It is found in the nucleus. The enzyme catalyses 4-(hydroxyamino)quinoline N-oxide + 2 NAD(+) + H2O = 4-nitroquinoline N-oxide + 2 NADH + 2 H(+). Functionally, type II nitroreductase, able to reduce 4-nitroquinoline N-oxide (4-NQO) into 4-aminoquinoline-N-oxide (4-AQO) via 4-hydroxyaminoquinoline (4-HAQO), using NADH as reductant. involved in the oxidative stress response. Plays a possible role in the metal stress response. Involved in negative regulation of fatty acid metabolism. The polypeptide is nitroreductase FRM2 (Saccharomyces cerevisiae (strain ATCC 204508 / S288c) (Baker's yeast)).